The primary structure comprises 934 residues: Pesticidal crystal protein Cry1Aa (934 aa).

This sequence belongs to the delta endotoxin family.

Promotes colloidosmotic lysis by binding to the midgut epithelial cells of many lepidopteran larvae. This chain is Pesticidal crystal protein Cry1Aa (cry1Aa), found in Bacillus thuringiensis subsp. sotto.